A 223-amino-acid chain; its full sequence is Sigma non-opioid intracellular receptor 1 (223 aa).

Residues 1–9 (MQWALGRRW) lie on the Lumenal side of the membrane. The segment at 2–8 (QWALGRR) is targeting to endoplasmic reticulum-associated lipid droplets. Residues 10 to 30 (VWAALLLAAAAVLTQVVWLWL) form a helical membrane-spanning segment. The Cytoplasmic portion of the chain corresponds to 31-223 (GTQSFVFQHE…FTTYLFGQDS (193 aa)). Positions 99–106 (SLSEYVLL) are important for ligand-binding. A C-terminal hydrophobic region region spans residues 177–223 (VIPSTLAFALADTIFSTQDFLTLFYTLRAYARGLRLEFTTYLFGQDS).

This sequence belongs to the ERG2 family. Homotrimer. Forms a ternary complex with ANK2 and ITPR3. The complex is disrupted by agonists. Interacts with KCNA4. Interacts with KCNA2; cocaine consumption leads to increased interaction. Interacts with RNF112 in an oxidative stress-regulated manner.

The protein resides in the nucleus inner membrane. The protein localises to the nucleus outer membrane. It localises to the nucleus envelope. It is found in the cytoplasmic vesicle. Its subcellular location is the endoplasmic reticulum membrane. The protein resides in the membrane. The protein localises to the lipid droplet. It localises to the cell junction. It is found in the cell membrane. Its subcellular location is the cell projection. The protein resides in the growth cone. The protein localises to the postsynaptic density membrane. Its function is as follows. Functions in lipid transport from the endoplasmic reticulum and is involved in a wide array of cellular functions probably through regulation of the biogenesis of lipid microdomains at the plasma membrane. Involved in the regulation of different receptors it plays a role in BDNF signaling and EGF signaling. Also regulates ion channels like the potassium channel and could modulate neurotransmitter release. Plays a role in calcium signaling through modulation together with ANK2 of the ITP3R-dependent calcium efflux at the endoplasmic reticulum. Plays a role in several other cell functions including proliferation, survival and death. Originally identified for its ability to bind various psychoactive drugs it is involved in learning processes, memory and mood alteration. Necessary for proper mitochondrial axonal transport in motor neurons, in particular the retrograde movement of mitochondria. Plays a role in protecting cells against oxidative stress-induced cell death via its interaction with RNF112. The chain is Sigma non-opioid intracellular receptor 1 (SIGMAR1) from Mustela erminea (Ermine).